The primary structure comprises 955 residues: 2-oxoglutarate dehydrogenase E1 component (955 aa).

Belongs to the alpha-ketoglutarate dehydrogenase family. Homodimer. Part of the 2-oxoglutarate dehydrogenase (OGDH) complex composed of E1 (2-oxoglutarate dehydrogenase), E2 (dihydrolipoamide succinyltransferase) and E3 (dihydrolipoamide dehydrogenase); the complex contains multiple copies of the three enzymatic components (E1, E2 and E3). Thiamine diphosphate is required as a cofactor.

The enzyme catalyses N(6)-[(R)-lipoyl]-L-lysyl-[protein] + 2-oxoglutarate + H(+) = N(6)-[(R)-S(8)-succinyldihydrolipoyl]-L-lysyl-[protein] + CO2. E1 component of the 2-oxoglutarate dehydrogenase (OGDH) complex which catalyzes the decarboxylation of 2-oxoglutarate, the first step in the conversion of 2-oxoglutarate to succinyl-CoA and CO(2). In Bacillus cereus (strain AH820), this protein is 2-oxoglutarate dehydrogenase E1 component.